Consider the following 357-residue polypeptide: N-acetyl-gamma-glutamyl-phosphate reductase (357 aa).

Cys-160 is a catalytic residue.

This sequence belongs to the NAGSA dehydrogenase family. Type 1 subfamily.

It localises to the cytoplasm. The catalysed reaction is N-acetyl-L-glutamate 5-semialdehyde + phosphate + NADP(+) = N-acetyl-L-glutamyl 5-phosphate + NADPH + H(+). It participates in amino-acid biosynthesis; L-arginine biosynthesis; N(2)-acetyl-L-ornithine from L-glutamate: step 3/4. Functionally, catalyzes the NADPH-dependent reduction of N-acetyl-5-glutamyl phosphate to yield N-acetyl-L-glutamate 5-semialdehyde. This Parasynechococcus marenigrum (strain WH8102) protein is N-acetyl-gamma-glutamyl-phosphate reductase.